The chain runs to 492 residues: Cytochrome P450 2A2 (492 aa).

A heme-binding site is contributed by C437.

This sequence belongs to the cytochrome P450 family. Requires heme as cofactor. As to expression, liver specific.

Its subcellular location is the endoplasmic reticulum membrane. It localises to the microsome membrane. It carries out the reaction an organic molecule + reduced [NADPH--hemoprotein reductase] + O2 = an alcohol + oxidized [NADPH--hemoprotein reductase] + H2O + H(+). In terms of biological role, highly active in the 15-alpha-hydroxylation of testosterone. The chain is Cytochrome P450 2A2 (Cyp2a2) from Rattus norvegicus (Rat).